Here is a 328-residue protein sequence, read N- to C-terminus: Serine protease 27 (328 aa).

An N-terminal signal peptide occupies residues methionine 1–glycine 22. Positions alanine 23 to arginine 37 are cleaved as a propeptide — activation peptide. In terms of domain architecture, Peptidase S1 spans methionine 38–proline 280. Cysteine 63 and cysteine 79 are oxidised to a cystine. The Charge relay system role is filled by histidine 78. Asparagine 82 carries N-linked (GlcNAc...) asparagine glycosylation. Aspartate 127 (charge relay system) is an active-site residue. 3 cysteine pairs are disulfide-bonded: cysteine 161-cysteine 238, cysteine 194-cysteine 217, and cysteine 228-cysteine 256. The active-site Charge relay system is serine 232.

It belongs to the peptidase S1 family.

Its subcellular location is the secreted. This Mus musculus (Mouse) protein is Serine protease 27 (Prss27).